The primary structure comprises 157 residues: Transcriptional repressor NrdR (157 aa).

A zinc finger spans residues 3 to 34; sequence CPFCGFADTRVIDSRLGKEGNNIRRRRECSQC. Residues 49-139 enclose the ATP-cone domain; it reads PLIIKKDARR…VYRQFKDINE (91 aa).

The protein belongs to the NrdR family. Requires Zn(2+) as cofactor.

Functionally, negatively regulates transcription of bacterial ribonucleotide reductase nrd genes and operons by binding to NrdR-boxes. This chain is Transcriptional repressor NrdR, found in Syntrophotalea carbinolica (strain DSM 2380 / NBRC 103641 / GraBd1) (Pelobacter carbinolicus).